Reading from the N-terminus, the 92-residue chain is MGRSLKKGPFADASLLKKVKEQEGSEKKTVIKTWSRRSTIFPSFIGYTFAVYDGRKHVPVYVQEDMVGHKLGEFVPTRTFHGHASDDKKTGK.

It belongs to the universal ribosomal protein uS19 family.

Its function is as follows. Protein S19 forms a complex with S13 that binds strongly to the 16S ribosomal RNA. This is Small ribosomal subunit protein uS19 from Limosilactobacillus reuteri (strain DSM 20016) (Lactobacillus reuteri).